A 394-amino-acid chain; its full sequence is RNA binding protein fox-1 homolog 2 (394 aa).

Disordered regions lie at residues 1–70 (MGRL…DYAG) and 83–135 (TQAH…HVSN). 2 stretches are compositionally biased toward polar residues: residues 24–36 (RDSQ…TTTP) and 83–103 (TQAH…SLTT). The span at 105 to 125 (GGAQTDGQQSQTQSSENSESK) shows a compositional bias: low complexity. One can recognise an RRM domain in the interval 129–205 (KRLHVSNIPF…RKIEVNNATA (77 aa)). Residue R285 is modified to Omega-N-methylarginine. 2 positions are modified to asymmetric dimethylarginine: R301 and R333. R385 and R390 each carry asymmetric dimethylarginine; alternate. An omega-N-methylarginine; alternate mark is found at R385 and R390.

As to quaternary structure, interacts with ER-alpha N-terminal activation domain. Interacts with RBPMS; the interaction allows cooperative assembly of stable cell-specific alternative splicing regulatory complexes.

It localises to the nucleus. Its subcellular location is the cytoplasm. In terms of biological role, RNA-binding protein that regulates alternative splicing events by binding to 5'-UGCAUGU-3' elements. Prevents binding of U2AF2 to the 3'-splice site. Regulates alternative splicing of tissue-specific exons and of differentially spliced exons during erythropoiesis. Seems to act as a coregulatory factor of ER-alpha. Together with RNA binding proteins RBPMS and MBNL1/2, activates vascular smooth muscle cells alternative splicing events. In Bos taurus (Bovine), this protein is RNA binding protein fox-1 homolog 2 (RBFOX2).